The primary structure comprises 511 residues: ATP synthase subunit alpha (511 aa).

Residue 169–176 (GDRQTGKT) participates in ATP binding.

It belongs to the ATPase alpha/beta chains family. F-type ATPases have 2 components, CF(1) - the catalytic core - and CF(0) - the membrane proton channel. CF(1) has five subunits: alpha(3), beta(3), gamma(1), delta(1), epsilon(1). CF(0) has three main subunits: a(1), b(2) and c(9-12). The alpha and beta chains form an alternating ring which encloses part of the gamma chain. CF(1) is attached to CF(0) by a central stalk formed by the gamma and epsilon chains, while a peripheral stalk is formed by the delta and b chains.

The protein resides in the cell inner membrane. The enzyme catalyses ATP + H2O + 4 H(+)(in) = ADP + phosphate + 5 H(+)(out). Its function is as follows. Produces ATP from ADP in the presence of a proton gradient across the membrane. The alpha chain is a regulatory subunit. This chain is ATP synthase subunit alpha, found in Paracoccus denitrificans (strain Pd 1222).